The primary structure comprises 131 residues: Small ribosomal subunit protein uS8 (131 aa).

Belongs to the universal ribosomal protein uS8 family. As to quaternary structure, part of the 30S ribosomal subunit. Contacts proteins S5 and S12.

In terms of biological role, one of the primary rRNA binding proteins, it binds directly to 16S rRNA central domain where it helps coordinate assembly of the platform of the 30S subunit. This is Small ribosomal subunit protein uS8 from Porphyromonas gingivalis (strain ATCC 33277 / DSM 20709 / CIP 103683 / JCM 12257 / NCTC 11834 / 2561).